A 373-amino-acid chain; its full sequence is Spore coat polysaccharide biosynthesis protein SpsE (373 aa).

One can recognise an AFP-like domain in the interval 305 to 367; that stretch reads GIFTTAPIQK…GIVWDDILLK (63 aa).

The protein operates within spore coat biogenesis; spore coat polysaccharide biosynthesis. The polypeptide is Spore coat polysaccharide biosynthesis protein SpsE (spsE) (Bacillus subtilis (strain 168)).